The sequence spans 320 residues: rRNA methyltransferase 2, mitochondrial (320 aa).

The transit peptide at 1–18 (MILVYNRIRSIISSSLGR) directs the protein to the mitochondrion. S-adenosyl-L-methionine-binding positions include 83–86 (PGAW), aspartate 104, 178–179 (DI), and aspartate 203. The Proton acceptor role is filled by lysine 264.

This sequence belongs to the class I-like SAM-binding methyltransferase superfamily. RNA methyltransferase RlmE family.

It is found in the mitochondrion. It carries out the reaction uridine(2791) in 21S rRNA + S-adenosyl-L-methionine = 2'-O-methyluridine(2791) in 21S rRNA + S-adenosyl-L-homocysteine + H(+). Its function is as follows. S-adenosyl-L-methionine-dependent 2'-O-ribose methyltransferase that catalyzes the formation of 2'-O-methyluridine at position 2791 (Um2791) in the 21S mitochondrial large subunit ribosomal RNA (mtLSU rRNA), a universally conserved modification in the peptidyl transferase domain of the mtLSU rRNA. The polypeptide is rRNA methyltransferase 2, mitochondrial (Saccharomyces cerevisiae (strain ATCC 204508 / S288c) (Baker's yeast)).